Reading from the N-terminus, the 363-residue chain is Nicotinamide adenine dinucleotide transporter 2, mitochondrial (363 aa).

3 Solcar repeats span residues 15-107 (REVA…LKDV), 115-203 (LSIG…IKQY), and 215-305 (LSPG…MLRF). The next 6 helical transmembrane spans lie at 21–41 (AGAGATAGAIAATFVCPLDVI), 82–102 (GLSPTIIALLPNWAVYFSVYG), 121–141 (MIAAAGAGAATSIATNPLWVV), 176–196 (LYSGILPSLAGVSHVAIQFPA), 215–235 (LSPGNVAIASSIAKVIASILT), and 277–299 (LYRGCATNLLRTTPSAVITFTTY). The tract at residues 313 to 363 (ETNRSDDRRREEERKNLVSRRGEEEDKDLGLRESQTQSNKISTPHIPLGSK) is disordered. The segment covering 315–343 (NRSDDRRREEERKNLVSRRGEEEDKDLGL) has biased composition (basic and acidic residues). Residues 345 to 354 (ESQTQSNKIS) are compositionally biased toward polar residues.

It belongs to the mitochondrial carrier (TC 2.A.29) family. Highly expressed in young meristematic shoot area, vascular bundles of leaves, developing siliques including the funiculi, petal veins, developing pollen and central cylinder of roots.

The protein resides in the mitochondrion membrane. Its activity is regulated as follows. Inhibited by pyridoxal 5'-phosphate, bathophenanthroline, tannic acid, mersalyl, mercuric chloride, p-hydroxymercuribenzoate, p-hydroxymercuribenzoate sulfonate, bromocresol purple and N-ethylmaleimide. Functionally, mediates the NAD(+) import into chloroplast. Favors the NAD(+)(in)/ADP or AMP(out) antiport exchange, but is also able to catalyze a low unidirectional transport (uniport) of NAD(+). Transports NAD(+), nicotinic acid adenine dinucleotide, nicotinamide mononucleotide, nicotinic acid mononucleotide, FAD, FMN, TTP, TDP, TMP, UTP, UDP, UMP, CTP, CDP, CMP, GTP, GDP, GMP, 3'-AMP, ATP, ADP and AMP, has low transport activity with cAMP, NADH and alpha-NAD(+), and has no activity with NADP(+), NADPH, nicotinamide, nicotinic acid, adenosine, thiamine mono- or diphosphate, inorganic phosphate, CoA, folate, NaCl, malate, malonate, citrate, fumarate, aspartate, glutamate, S-adenosylmethionine, lysine, arginine, and ornithine. The chain is Nicotinamide adenine dinucleotide transporter 2, mitochondrial (NDT2) from Arabidopsis thaliana (Mouse-ear cress).